We begin with the raw amino-acid sequence, 129 residues long: Fluoride-specific ion channel FluC (129 aa).

Transmembrane regions (helical) follow at residues 8 to 28 (FFCVAVGGAIGASARFAMVLA), 36 to 56 (AFPFATLTVNIIGSFFLGLLL), 71 to 91 (FLGVGLLGAFTTFSTFSVEVV), and 103 to 123 (ALHIAFNVIICIAAVFAAMML). The Na(+) site is built by G78 and T81.

The protein belongs to the fluoride channel Fluc/FEX (TC 1.A.43) family.

It localises to the cell inner membrane. It carries out the reaction fluoride(in) = fluoride(out). With respect to regulation, na(+) is not transported, but it plays an essential structural role and its presence is essential for fluoride channel function. In terms of biological role, fluoride-specific ion channel. Important for reducing fluoride concentration in the cell, thus reducing its toxicity. This chain is Fluoride-specific ion channel FluC, found in Idiomarina loihiensis (strain ATCC BAA-735 / DSM 15497 / L2-TR).